The sequence spans 294 residues: Pyridoxal 5'-phosphate synthase subunit PdxS (294 aa).

D24 serves as a coordination point for D-ribose 5-phosphate. Catalysis depends on K81, which acts as the Schiff-base intermediate with D-ribose 5-phosphate. G153 provides a ligand contact to D-ribose 5-phosphate. D-glyceraldehyde 3-phosphate is bound at residue R165. Residues G214 and G235 to S236 contribute to the D-ribose 5-phosphate site.

This sequence belongs to the PdxS/SNZ family. In terms of assembly, homohexamer and homododecamer. In the presence of PdxT, forms a dodecamer of heterodimers.

The catalysed reaction is aldehydo-D-ribose 5-phosphate + D-glyceraldehyde 3-phosphate + L-glutamine = pyridoxal 5'-phosphate + L-glutamate + phosphate + 3 H2O + H(+). The protein operates within cofactor biosynthesis; pyridoxal 5'-phosphate biosynthesis. In terms of biological role, catalyzes the formation of pyridoxal 5'-phosphate from ribose 5-phosphate (RBP), glyceraldehyde 3-phosphate (G3P) and ammonia. The ammonia is provided by the PdxT subunit. Can also use ribulose 5-phosphate and dihydroxyacetone phosphate as substrates, resulting from enzyme-catalyzed isomerization of RBP and G3P, respectively. This chain is Pyridoxal 5'-phosphate synthase subunit PdxS, found in Bacillus subtilis (strain 168).